Here is a 160-residue protein sequence, read N- to C-terminus: Lipoprotein signal peptidase (160 aa).

3 helical membrane passes run I13–I33, W72–L92, and S104–V124. Active-site residues include D125 and D143. Residues W134–M154 form a helical membrane-spanning segment.

This sequence belongs to the peptidase A8 family.

Its subcellular location is the cell inner membrane. The catalysed reaction is Release of signal peptides from bacterial membrane prolipoproteins. Hydrolyzes -Xaa-Yaa-Zaa-|-(S,diacylglyceryl)Cys-, in which Xaa is hydrophobic (preferably Leu), and Yaa (Ala or Ser) and Zaa (Gly or Ala) have small, neutral side chains.. Its pathway is protein modification; lipoprotein biosynthesis (signal peptide cleavage). Functionally, this protein specifically catalyzes the removal of signal peptides from prolipoproteins. The chain is Lipoprotein signal peptidase from Buchnera aphidicola subsp. Acyrthosiphon pisum (strain 5A).